The primary structure comprises 363 residues: Two-pore potassium channel 1 (363 aa).

The segment at 1–61 is disordered; that stretch reads MSSDAARTPL…DDVKIDEPPP (61 aa). Residues 1–78 lie on the Cytoplasmic side of the membrane; it reads MSSDAARTPL…FSDLNPNLRR (78 aa). The segment covering 31-42 has biased composition (basic residues); sequence SSRKRRLRRSRS. The helical transmembrane segment at 79–99 threads the bilayer; it reads VIMFLALYLTIGTLCFYLVRD. Residues 111-130 constitute an intramembrane region (pore-forming); that stretch reads DALYFCIVTMTTVGYGDLVP. A helical membrane pass occupies residues 137–157; sequence LLACAFVFSGMVLVGHLLSRA. Topologically, residues 158–197 are cytoplasmic; it reads ADYLVEKQEALLVRAFHLRQSFGPTDILKELHTNKLRYKC. The chain crosses the membrane as a helical span at residues 198–218; the sequence is YATCLVLVVLFIVGTIFLVMV. Residues 225 to 244 constitute an intramembrane region (pore-forming); it reads SAFYCVCSTVTTLGYGDKSF. Residues 251 to 271 form a helical membrane-spanning segment; sequence LFAVFWILTSSICLAQFFLYV. At 272 to 363 the chain is on the cytoplasmic side; that stretch reads AELNTENKQR…LAQTTSQIQR (92 aa). EF-hand domains lie at 288-323 and 327-362; these read LTRR…EMGK and KDIS…SQIQ. An Endoplasmic reticulum release signal motif is present at residues 296 to 298; it reads DLE. Residues D301, D303, D305, E312, D340, D342, S344, T346, and D351 each contribute to the Ca(2+) site.

This sequence belongs to the two pore domain potassium channel (TC 1.A.1.7) family. Homodimer. Interacts with GRF1 and GRF6, but only GRF6 modulates the channel activity. Phosphorylation at Ser-42 increases and stabilizes the interaction with 14-3-3 proteins. As to expression, detected in mesophyll cells, guard cells and vascular tissues of the leaves. Expressed in the hilum, where the funiculus is attached during fruit maturation and in the embryo. Also expressed at a lower level in seedlings, root tips and elongation zones, and flowers. Could be detected in mitotically active tissues.

It is found in the vacuole membrane. Its activity is regulated as follows. Could be activated by protein kinase C. Strongly induced by calcium. Blocked by barium, tetraethylammonium (TEA), quinine and quinidine. In terms of biological role, voltage-independent, large conductance and potassium-selective tonoplast ion channel. Regulated by cytoplasmic calcium and pH. Does not mediate slow-vacuolar (SV) ionic currents, but essential to establish VK currents. Has some permeability for Rb(+) and NH(4)(+), but none for Na(+), Cs(+) or Li(+). Involved in intracellular K(+) redistribution and/or K(+) retranslocation between different tissues. This is Two-pore potassium channel 1 (TPK1) from Arabidopsis thaliana (Mouse-ear cress).